The chain runs to 341 residues: Biotin synthase (341 aa).

In terms of domain architecture, Radical SAM core spans 39-263 (EQVQLCTLLS…VAVARITMPL (225 aa)). Positions 54, 58, and 61 each coordinate [4Fe-4S] cluster. The [2Fe-2S] cluster site is built by cysteine 98, cysteine 129, cysteine 189, and arginine 267.

Belongs to the radical SAM superfamily. Biotin synthase family. In terms of assembly, homodimer. The cofactor is [4Fe-4S] cluster. It depends on [2Fe-2S] cluster as a cofactor.

It catalyses the reaction (4R,5S)-dethiobiotin + (sulfur carrier)-SH + 2 reduced [2Fe-2S]-[ferredoxin] + 2 S-adenosyl-L-methionine = (sulfur carrier)-H + biotin + 2 5'-deoxyadenosine + 2 L-methionine + 2 oxidized [2Fe-2S]-[ferredoxin]. Its pathway is cofactor biosynthesis; biotin biosynthesis; biotin from 7,8-diaminononanoate: step 2/2. Its function is as follows. Catalyzes the conversion of dethiobiotin (DTB) to biotin by the insertion of a sulfur atom into dethiobiotin via a radical-based mechanism. This Erythrobacter litoralis (strain HTCC2594) protein is Biotin synthase.